An 82-amino-acid polypeptide reads, in one-letter code: MATSTNSREFLIFICVLTLLVVRSEARLVPMLFSTKEKVMNSKFGLREVINDVRNSEWLRKRALLGGKPERVSPGGPDAQHH.

The N-terminal stretch at 1-26 (MATSTNSREFLIFICVLTLLVVRSEA) is a signal peptide. Pro74 and Pro77 each carry hydroxyproline. A glycan (O-linked (Ara...) hydroxyproline) is linked at Pro77.

The protein belongs to the CLV3/ESR signal peptide family. In terms of processing, the O-glycosylation (arabinosylation) of the hydroxyproline Pro-77 enhances binding affinity of the CLE53p peptide for its receptor. As to expression, expressed in root vasculature.

The protein resides in the secreted. Its subcellular location is the extracellular space. Functionally, signaling peptide involved in the regulation of root colonization by arbuscular mycorrhizal (AM) fungi. Moves from root to shoot to function with the receptor kinase SUNN, in a signaling pathway that repress strigolactone biosynthetic genes and strigolactone content in the roots, and consequently reduces the promotion of further colonization by AM fungi. The sequence is that of CLAVATA3/ESR (CLE)-related protein 53 from Medicago truncatula (Barrel medic).